Here is a 374-residue protein sequence, read N- to C-terminus: Protein RecA (374 aa).

77 to 84 (GPESSGKT) provides a ligand contact to ATP. The tract at residues 355 to 374 (AAKTAAADKSAPAKASEAAA) is disordered.

It belongs to the RecA family.

The protein localises to the cytoplasm. Functionally, can catalyze the hydrolysis of ATP in the presence of single-stranded DNA, the ATP-dependent uptake of single-stranded DNA by duplex DNA, and the ATP-dependent hybridization of homologous single-stranded DNAs. It interacts with LexA causing its activation and leading to its autocatalytic cleavage. The sequence is that of Protein RecA from Synechococcus sp. (strain CC9605).